The primary structure comprises 309 residues: Fe-S cluster assembly protein dre2 (309 aa).

Residues 1-132 (MTTTIVLASP…LRRPAQVEAV (132 aa)) are N-terminal SAM-like domain. Residues 133-195 (PLKLSTKKSA…DALVSDEETQ (63 aa)) form a linker region. [2Fe-2S] cluster-binding residues include C207, C216, C219, and C221. The segment at 207 to 221 (CSKPGKKKRCKNCTC) is fe-S binding site A. The [4Fe-4S] cluster site is built by C265, C268, C276, and C279. 2 short sequence motifs (cx2C motif) span residues 265–268 (CGSC) and 276–279 (CSGC). Residues 265-279 (CGSCYLGDAFRCSGC) are fe-S binding site B.

It belongs to the anamorsin family. As to quaternary structure, monomer. Interacts with TAH18. Interacts with MIA40. Requires [2Fe-2S] cluster as cofactor. It depends on [4Fe-4S] cluster as a cofactor.

It localises to the cytoplasm. It is found in the mitochondrion intermembrane space. Component of the cytosolic iron-sulfur (Fe-S) protein assembly (CIA) machinery required for the maturation of extramitochondrial Fe-S proteins. Part of an electron transfer chain functioning in an early step of cytosolic Fe-S biogenesis, facilitating the de novo assembly of a [4Fe-4S] cluster on the scaffold complex CFD1-NBP35. Electrons are transferred to DRE2 from NADPH via the FAD- and FMN-containing protein TAH18. TAH18-DRE2 are also required for the assembly of the diferric tyrosyl radical cofactor of ribonucleotide reductase (RNR), probably by providing electrons for reduction during radical cofactor maturation in the catalytic small subunit RNR2. This Schizosaccharomyces japonicus (strain yFS275 / FY16936) (Fission yeast) protein is Fe-S cluster assembly protein dre2.